Here is a 1367-residue protein sequence, read N- to C-terminus: DNA polymerase III PolC-type (1367 aa).

The 156-residue stretch at 358–513 (FVVLDFETTG…DDARVTAQVF (156 aa)) folds into the Exonuclease domain.

This sequence belongs to the DNA polymerase type-C family. PolC subfamily.

It localises to the cytoplasm. It carries out the reaction DNA(n) + a 2'-deoxyribonucleoside 5'-triphosphate = DNA(n+1) + diphosphate. Its function is as follows. Required for replicative DNA synthesis. This DNA polymerase also exhibits 3' to 5' exonuclease activity. This chain is DNA polymerase III PolC-type, found in Thermotoga petrophila (strain ATCC BAA-488 / DSM 13995 / JCM 10881 / RKU-1).